A 280-amino-acid polypeptide reads, in one-letter code: 3-phenylpropionate-dihydrodiol/cinnamic acid-dihydrodiol dehydrogenase (280 aa).

Position 143 (serine 143) interacts with substrate. Tyrosine 156 serves as the catalytic Proton acceptor.

This sequence belongs to the short-chain dehydrogenases/reductases (SDR) family.

The enzyme catalyses 3-(cis-5,6-dihydroxycyclohexa-1,3-dien-1-yl)propanoate + NAD(+) = 3-(2,3-dihydroxyphenyl)propanoate + NADH + H(+). It catalyses the reaction (2E)-3-(cis-5,6-dihydroxycyclohexa-1,3-dien-1-yl)prop-2-enoate + NAD(+) = (2E)-3-(2,3-dihydroxyphenyl)prop-2-enoate + NADH + H(+). Its pathway is aromatic compound metabolism; 3-phenylpropanoate degradation. Functionally, converts 3-phenylpropionate-dihydrodiol (PP-dihydrodiol) and cinnamic acid-dihydrodiol (CI-dihydrodiol) into 3-(2,3-dihydroxylphenyl)propanoic acid (DHPP) and 2,3-dihydroxicinnamic acid (DHCI), respectively. The protein is 3-phenylpropionate-dihydrodiol/cinnamic acid-dihydrodiol dehydrogenase of Photorhabdus laumondii subsp. laumondii (strain DSM 15139 / CIP 105565 / TT01) (Photorhabdus luminescens subsp. laumondii).